A 298-amino-acid chain; its full sequence is MTQLIITHQSDSKLEESEVFLSELNRIKKEEDKFGKFSSLSDLRAIVKKGEFRIVSIYLSSGSILGEIFTFEFLKEFYGVLDFGSVLKVNILALDSIDKVKAFERNLLFSGFIKVKKLKGDGLNSSDSDFEIVIKAEKPSWKPEEGKVLVDDIDLEGSVPDIKNYVPLGQGKESCKSKERACNNCNCGRADLEKEIGVEAARKVYQEKVETGTARSSCGNCYLGDAFRCSGCPYKGMPAFKPGEKVSLANAEGDANDHTVDMNLIHEEKVDLITTTFDDDGSGVNNVQSKGGVLKLNI.

The tract at residues 1–143 (MTQLIITHQS…IKAEKPSWKP (143 aa)) is N-terminal SAM-like domain. Positions 143 to 162 (PEEGKVLVDDIDLEGSVPDI) are linker. [2Fe-2S] cluster is bound by residues Cys175, Cys182, Cys185, and Cys187. Residues 175–187 (CKSKERACNNCNC) are fe-S binding site A. [4Fe-4S] cluster is bound by residues Cys218, Cys221, Cys229, and Cys232. 2 short sequence motifs (cx2C motif) span residues 218-221 (CGNC) and 229-232 (CSGC). The interval 218–232 (CGNCYLGDAFRCSGC) is fe-S binding site B.

Belongs to the anamorsin family. In terms of assembly, monomer. Requires [2Fe-2S] cluster as cofactor. [4Fe-4S] cluster serves as cofactor.

It is found in the cytoplasm. Its subcellular location is the mitochondrion intermembrane space. In terms of biological role, component of the cytosolic iron-sulfur (Fe-S) protein assembly (CIA) machinery. Required for the maturation of extramitochondrial Fe-S proteins. Part of an electron transfer chain functioning in an early step of cytosolic Fe-S biogenesis, facilitating the de novo assembly of a [4Fe-4S] cluster on the cytosolic Fe-S scaffold complex. Electrons are transferred from NADPH via a FAD- and FMN-containing diflavin oxidoreductase. Together with the diflavin oxidoreductase, also required for the assembly of the diferric tyrosyl radical cofactor of ribonucleotide reductase (RNR), probably by providing electrons for reduction during radical cofactor maturation in the catalytic small subunit. This chain is Anamorsin homolog, found in Cryptosporidium parvum (strain Iowa II).